Reading from the N-terminus, the 506-residue chain is Protein MGF 505-9R (506 aa).

It belongs to the asfivirus MGF 505 family.

In terms of biological role, plays a role in virus cell tropism, and may be required for efficient virus replication in macrophages. This is Protein MGF 505-9R from African swine fever virus (isolate Tick/South Africa/Pretoriuskop Pr4/1996) (ASFV).